Consider the following 321-residue polypeptide: Ubiquinone biosynthesis O-methyltransferase, mitochondrial (321 aa).

Residues Arg-102, Gly-135, Asp-157, and Leu-210 each coordinate S-adenosyl-L-methionine. Mg(2+) contacts are provided by Glu-211, Glu-214, and His-215.

Belongs to the class I-like SAM-binding methyltransferase superfamily. UbiG/COQ3 family. In terms of assembly, component of a multi-subunit COQ enzyme complex. Mg(2+) serves as cofactor.

It is found in the mitochondrion inner membrane. The enzyme catalyses a 3,4-dihydroxy-5-(all-trans-polyprenyl)benzoate + S-adenosyl-L-methionine = a 4-hydroxy-3-methoxy-5-(all-trans-polyprenyl)benzoate + S-adenosyl-L-homocysteine + H(+). The catalysed reaction is a 3-demethylubiquinone + S-adenosyl-L-methionine = a ubiquinone + S-adenosyl-L-homocysteine. It carries out the reaction a 3-demethylubiquinol + S-adenosyl-L-methionine = a ubiquinol + S-adenosyl-L-homocysteine + H(+). Its pathway is cofactor biosynthesis; ubiquinone biosynthesis. In terms of biological role, O-methyltransferase required for two non-consecutive steps during ubiquinone biosynthesis. Catalyzes the 2 O-methylation of 3,4-dihydroxy-5-(all-trans-polyprenyl)benzoic acid into 4-hydroxy-3-methoxy-5-(all-trans-polyprenyl)benzoic acid. Also catalyzes the last step of ubiquinone biosynthesis by mediating methylation of 3-demethylubiquinone into ubiquinone. Also able to mediate the methylation of 3-demethylubiquinol into ubiquinol. The protein is Ubiquinone biosynthesis O-methyltransferase, mitochondrial of Dictyostelium discoideum (Social amoeba).